Reading from the N-terminus, the 119-residue chain is Large ribosomal subunit protein bL20 (119 aa).

Belongs to the bacterial ribosomal protein bL20 family.

Binds directly to 23S ribosomal RNA and is necessary for the in vitro assembly process of the 50S ribosomal subunit. It is not involved in the protein synthesizing functions of that subunit. This is Large ribosomal subunit protein bL20 from Streptococcus equi subsp. equi (strain 4047).